Reading from the N-terminus, the 320-residue chain is Porphobilinogen deaminase (320 aa).

Cys248 is modified (S-(dipyrrolylmethanemethyl)cysteine).

This sequence belongs to the HMBS family. In terms of assembly, monomer. The cofactor is dipyrromethane.

It catalyses the reaction 4 porphobilinogen + H2O = hydroxymethylbilane + 4 NH4(+). It participates in porphyrin-containing compound metabolism; protoporphyrin-IX biosynthesis; coproporphyrinogen-III from 5-aminolevulinate: step 2/4. Its pathway is porphyrin-containing compound metabolism; chlorophyll biosynthesis. Tetrapolymerization of the monopyrrole PBG into the hydroxymethylbilane pre-uroporphyrinogen in several discrete steps. This Synechococcus elongatus (strain ATCC 33912 / PCC 7942 / FACHB-805) (Anacystis nidulans R2) protein is Porphobilinogen deaminase.